A 191-amino-acid polypeptide reads, in one-letter code: Abscisic acid receptor PYR1 (191 aa).

An START-like region spans residues 23-176 (YQLDPGSCSS…NLQKLATVAE (154 aa)). Lys-59 contributes to the abscisate binding site. A Phosphothreonine; by CARK1 modification is found at Thr-78. Positions 85-89 (SGLPA) match the Gate loop motif. Residues 89-94 (ANTSTE), 116-122 (RLTNYKS), and Glu-141 each bind abscisate. A Latch loop motif is present at residues 115–117 (HRL).

This sequence belongs to the PYR/PYL/RCAR abscisic acid intracellular receptor family. In terms of assembly, homodimer. Binds ABA on one subunit only. Interacts with HAB1, AHG3, ABI1 and ABI2 when complexed to ABA, and possibly with other PP2Cs. Binds to CARs protein in an ABA-independent manner, both at the plasma membrane and in the nucleus. Interacts directly with CAR1 and CAR4. Interacts with CARK1 in the cytosol. Interacts with AIP1 in an abscisic acid-dependent manner. Interacts with FREE1 (via N-terminus). Interacts with the E3 ubiquitin-protein ligase RSL1 at the plasma membrane. Post-translationally, ubiquitynated and degraded by the proteasome upon binding to the E3 ubiquitin-protein ligase RSL1 at the plasma membrane. Phosphorylated by CARK1 especially in response to abscisic acid (ABA); this phosphorylation promotes its stability and inhibitory ability to ABI1.

Its subcellular location is the cytoplasm. It localises to the cytosol. The protein localises to the nucleus. It is found in the cell membrane. The protein resides in the vacuole. Its function is as follows. Receptor for abscisic acid (ABA) required for ABA-mediated responses such as stomatal closure and germination inhibition. Inhibits the activity of group-A protein phosphatases type 2C (PP2Cs) when activated by ABA. Can be activated by both (-)-ABA and (+)-ABA. Promotes drought tolerance. This chain is Abscisic acid receptor PYR1, found in Arabidopsis thaliana (Mouse-ear cress).